Reading from the N-terminus, the 280-residue chain is uncharacterized protein (280 aa).

This is an uncharacterized protein from Acanthamoeba polyphaga (Amoeba).